Consider the following 332-residue polypeptide: L-lactate dehydrogenase A chain (332 aa).

K5 carries the N6-acetyllysine; alternate modification. At K5 the chain carries N6-succinyllysine; alternate. K14 is subject to N6-acetyllysine. Residue T18 is modified to Phosphothreonine. An NAD(+)-binding site is contributed by 29-57 (GAVGMACAISILMKDLADELALVDVIEDK). Position 57 is an N6-acetyllysine; alternate (K57). K57 participates in a covalent cross-link: Glycyl lysine isopeptide (Lys-Gly) (interchain with G-Cter in SUMO2); alternate. K81 bears the N6-acetyllysine mark. Position 99 (R99) interacts with NAD(+). Position 106 (R106) interacts with substrate. N6-acetyllysine; alternate is present on K118. At K118 the chain carries N6-succinyllysine; alternate. The residue at position 126 (K126) is an N6-acetyllysine. N138 provides a ligand contact to NAD(+). Residues N138 and R169 each contribute to the substrate site. H193 acts as the Proton acceptor in catalysis. Residue K232 is modified to N6-acetyllysine. Y239 carries the post-translational modification Phosphotyrosine. At K243 the chain carries N6-acetyllysine. Position 248 (T248) interacts with substrate. Residues T309 and T322 each carry the phosphothreonine modification.

This sequence belongs to the LDH/MDH superfamily. LDH family. In terms of assembly, homotetramer. Interacts with PTEN upstream reading frame protein MP31. ISGylated.

The protein localises to the cytoplasm. The catalysed reaction is (S)-lactate + NAD(+) = pyruvate + NADH + H(+). The protein operates within fermentation; pyruvate fermentation to lactate; (S)-lactate from pyruvate: step 1/1. Functionally, interconverts simultaneously and stereospecifically pyruvate and lactate with concomitant interconversion of NADH and NAD(+). This chain is L-lactate dehydrogenase A chain (LDHA), found in Monodelphis domestica (Gray short-tailed opossum).